A 156-amino-acid polypeptide reads, in one-letter code: ATP synthase subunit b (156 aa).

The helical transmembrane segment at 7–27 threads the bilayer; sequence IFFQMLVFFVLGWFTMKFVWP.

The protein belongs to the ATPase B chain family. In terms of assembly, F-type ATPases have 2 components, F(1) - the catalytic core - and F(0) - the membrane proton channel. F(1) has five subunits: alpha(3), beta(3), gamma(1), delta(1), epsilon(1). F(0) has three main subunits: a(1), b(2) and c(10-14). The alpha and beta chains form an alternating ring which encloses part of the gamma chain. F(1) is attached to F(0) by a central stalk formed by the gamma and epsilon chains, while a peripheral stalk is formed by the delta and b chains.

The protein localises to the cell inner membrane. F(1)F(0) ATP synthase produces ATP from ADP in the presence of a proton or sodium gradient. F-type ATPases consist of two structural domains, F(1) containing the extramembraneous catalytic core and F(0) containing the membrane proton channel, linked together by a central stalk and a peripheral stalk. During catalysis, ATP synthesis in the catalytic domain of F(1) is coupled via a rotary mechanism of the central stalk subunits to proton translocation. Functionally, component of the F(0) channel, it forms part of the peripheral stalk, linking F(1) to F(0). The sequence is that of ATP synthase subunit b from Bordetella petrii (strain ATCC BAA-461 / DSM 12804 / CCUG 43448).